The chain runs to 877 residues: Alanine--tRNA ligase (877 aa).

Residues histidine 566, histidine 570, cysteine 668, and histidine 672 each coordinate Zn(2+).

The protein belongs to the class-II aminoacyl-tRNA synthetase family. The cofactor is Zn(2+).

It localises to the cytoplasm. The enzyme catalyses tRNA(Ala) + L-alanine + ATP = L-alanyl-tRNA(Ala) + AMP + diphosphate. Catalyzes the attachment of alanine to tRNA(Ala) in a two-step reaction: alanine is first activated by ATP to form Ala-AMP and then transferred to the acceptor end of tRNA(Ala). Also edits incorrectly charged Ser-tRNA(Ala) and Gly-tRNA(Ala) via its editing domain. The sequence is that of Alanine--tRNA ligase from Staphylococcus aureus (strain USA300 / TCH1516).